A 239-amino-acid polypeptide reads, in one-letter code: UPF0173 metal-dependent hydrolase Msm_0779 (239 aa).

The protein belongs to the UPF0173 family.

This chain is UPF0173 metal-dependent hydrolase Msm_0779, found in Methanobrevibacter smithii (strain ATCC 35061 / DSM 861 / OCM 144 / PS).